A 410-amino-acid polypeptide reads, in one-letter code: Na(+)/H(+) antiporter NhaA 1/4 (410 aa).

The next 11 membrane-spanning stretches (helical) occupy residues 16–36, 55–75, 95–115, 125–145, 156–176, 178–198, 215–235, 275–295, 299–319, 340–360, and 371–391; these read VGGS…NSPL, LNLS…FFIV, ALPI…FLAF, GGWG…LAVV, FLLT…AVAC, SGIN…FGYL, AWLL…ACGV, IALP…AGGF, AITW…IFGG, IAGI…IAEL, and AKGA…LLLG.

Belongs to the NhaA Na(+)/H(+) (TC 2.A.33) antiporter family.

It is found in the cell membrane. It catalyses the reaction Na(+)(in) + 2 H(+)(out) = Na(+)(out) + 2 H(+)(in). Its function is as follows. Na(+)/H(+) antiporter that extrudes sodium in exchange for external protons. This is Na(+)/H(+) antiporter NhaA 1/4 from Streptomyces coelicolor (strain ATCC BAA-471 / A3(2) / M145).